The chain runs to 248 residues: tRNA (guanine-N(1)-)-methyltransferase (248 aa).

Residues Gly-113 and 133–138 (IGDYVL) contribute to the S-adenosyl-L-methionine site. Residues 226 to 248 (ARPAQTIRAKGESQKTPKNKTDG) form a disordered region. Over residues 234–248 (AKGESQKTPKNKTDG) the composition is skewed to basic and acidic residues.

The protein belongs to the RNA methyltransferase TrmD family. In terms of assembly, homodimer.

The protein resides in the cytoplasm. The enzyme catalyses guanosine(37) in tRNA + S-adenosyl-L-methionine = N(1)-methylguanosine(37) in tRNA + S-adenosyl-L-homocysteine + H(+). Its function is as follows. Specifically methylates guanosine-37 in various tRNAs. The chain is tRNA (guanine-N(1)-)-methyltransferase from Rhodopseudomonas palustris (strain ATCC BAA-98 / CGA009).